Reading from the N-terminus, the 98-residue chain is NADH-ubiquinone oxidoreductase chain 4L (98 aa).

3 helical membrane-spanning segments follow: residues 1–21 (MAPI…GVLI), 28–48 (STLL…TLLI), and 59–79 (APLI…ALLV).

This sequence belongs to the complex I subunit 4L family. Core subunit of respiratory chain NADH dehydrogenase (Complex I) which is composed of 45 different subunits.

It is found in the mitochondrion inner membrane. The enzyme catalyses a ubiquinone + NADH + 5 H(+)(in) = a ubiquinol + NAD(+) + 4 H(+)(out). Its function is as follows. Core subunit of the mitochondrial membrane respiratory chain NADH dehydrogenase (Complex I) which catalyzes electron transfer from NADH through the respiratory chain, using ubiquinone as an electron acceptor. Part of the enzyme membrane arm which is embedded in the lipid bilayer and involved in proton translocation. The polypeptide is NADH-ubiquinone oxidoreductase chain 4L (MT-ND4L) (Isoodon macrourus (Short-nosed bandicoot)).